A 729-amino-acid chain; its full sequence is Polyribonucleotide nucleotidyltransferase (729 aa).

Residues aspartate 485 and aspartate 491 each coordinate Mg(2+). The KH domain occupies 552 to 611 (PRITTMKVAEDKIRTIIGKGGATIKGLIESTGVSIDIDDSGVIQLFSPDKMALEEAQKQI). One can recognise an S1 motif domain in the interval 621–689 (GQTYQGKVSK…KQGRVKLEWK (69 aa)). Residues 710–729 (TMEEQSEEINSGNKISEEEE) form a disordered region.

The protein belongs to the polyribonucleotide nucleotidyltransferase family. In terms of assembly, component of the RNA degradosome, which is a multiprotein complex involved in RNA processing and mRNA degradation. Requires Mg(2+) as cofactor.

The protein resides in the cytoplasm. The enzyme catalyses RNA(n+1) + phosphate = RNA(n) + a ribonucleoside 5'-diphosphate. Functionally, involved in mRNA degradation. Catalyzes the phosphorolysis of single-stranded polyribonucleotides processively in the 3'- to 5'-direction. This Legionella pneumophila (strain Paris) protein is Polyribonucleotide nucleotidyltransferase.